A 190-amino-acid polypeptide reads, in one-letter code: MAKATTIKEALARWEEKTGQRPSEAKEIKLYAQIPPIEKMDASLSMLANCEKLSLSTNCIEKIANLNGLKNLRILSLGRNNIKNLNGLEAVGDTLEELWISYNFIEKLKGIHIMKKLKILYMSNNLVKDWAEFVKLAELPCLEDLVFVGNPLEEKHSAENNWIEEATKRVPKLKKLDGTPVIKGDEEEDN.

Ala2 is modified (N-acetylalanine). LRR repeat units follow at residues 49 to 70 (NCEK…NGLK), 71 to 92 (NLRI…EAVG), 94 to 115 (TLEE…HIMK), and 116 to 137 (KLKI…VKLA). Ser56 carries the post-translational modification Phosphoserine. Residues 150–190 (NPLEEKHSAENNWIEEATKRVPKLKKLDGTPVIKGDEEEDN) enclose the LRRCT domain.

The protein belongs to the dynein light chain LC1-type family. In terms of assembly, interacts with ZMYND10 (via C-terminus). Interacts with DNAH5, a outer arm dynein heavy chain. Interacts with tubulin located within the A-tubule of the outer doublets in a ATP-independent manner. As to expression, expressed in tissues carrying motile cilia such as respiratory epithelia, ependyma and testis.

The protein localises to the cytoplasm. The protein resides in the cytoskeleton. It localises to the cilium axoneme. Functionally, part of the multisubunit axonemal ATPase complexes that generate the force for cilia motility and govern beat frequency. Component of the outer arm dynein (ODA). May be involved in a mechanosensory feedback mechanism controlling ODA activity based on external conformational cues by tethering the outer arm dynein heavy chain (DNAH5) to the microtubule within the axoneme. Important for ciliary function in the airways and for the function of the cilia that produce the nodal flow essential for the determination of the left-right asymmetry. In Homo sapiens (Human), this protein is Dynein axonemal light chain 1.